The sequence spans 965 residues: Pullulanase 1, chloroplastic (965 aa).

A chloroplast-targeting transit peptide spans 1–62 (MALTLTPTSS…SKTSLHCLCS (62 aa)). The active-site Nucleophile is aspartate 552. The active-site Proton donor is the glutamate 589.

It belongs to the glycosyl hydrolase 13 family.

The protein resides in the plastid. The protein localises to the chloroplast stroma. It catalyses the reaction Hydrolysis of (1-&gt;6)-alpha-D-glucosidic linkages in alpha- and beta-limit dextrins of amylopectin and glycogen, and in amylopectin and pullulan.. The protein operates within glycan biosynthesis; starch biosynthesis. It functions in the pathway glycan degradation; starch degradation. In terms of biological role, involved in starch degradation and also probably in the trimming of pre-amylopectin chains during starch synthesis. In Arabidopsis thaliana (Mouse-ear cress), this protein is Pullulanase 1, chloroplastic (PU1).